The chain runs to 232 residues: uncharacterized protein (232 aa).

The interval 119-145 is disordered; the sequence is DEEYRENSKAPEAKARPSFVGEGRRLG. Basic and acidic residues predominate over residues 123–133; that stretch reads RENSKAPEAKA.

This is an uncharacterized protein from Encephalitozoon cuniculi (strain GB-M1) (Microsporidian parasite).